The primary structure comprises 379 residues: Carbamoyl phosphate synthase small chain (379 aa).

Positions 1–187 (MNFTPALLAL…GSGHAPAPAS (187 aa)) are CPSase. L-glutamine-binding residues include serine 48, glycine 239, and glycine 241. A Glutamine amidotransferase type-1 domain is found at 191–378 (KVVAYDFGVK…IELMKPQGVR (188 aa)). Cysteine 267 functions as the Nucleophile in the catalytic mechanism. L-glutamine-binding residues include leucine 268, glutamine 271, asparagine 309, glycine 311, and phenylalanine 312. Active-site residues include histidine 351 and glutamate 353.

This sequence belongs to the CarA family. As to quaternary structure, composed of two chains; the small (or glutamine) chain promotes the hydrolysis of glutamine to ammonia, which is used by the large (or ammonia) chain to synthesize carbamoyl phosphate. Tetramer of heterodimers (alpha,beta)4.

It catalyses the reaction hydrogencarbonate + L-glutamine + 2 ATP + H2O = carbamoyl phosphate + L-glutamate + 2 ADP + phosphate + 2 H(+). The enzyme catalyses L-glutamine + H2O = L-glutamate + NH4(+). It functions in the pathway amino-acid biosynthesis; L-arginine biosynthesis; carbamoyl phosphate from bicarbonate: step 1/1. Its pathway is pyrimidine metabolism; UMP biosynthesis via de novo pathway; (S)-dihydroorotate from bicarbonate: step 1/3. In terms of biological role, small subunit of the glutamine-dependent carbamoyl phosphate synthetase (CPSase). CPSase catalyzes the formation of carbamoyl phosphate from the ammonia moiety of glutamine, carbonate, and phosphate donated by ATP, constituting the first step of 2 biosynthetic pathways, one leading to arginine and/or urea and the other to pyrimidine nucleotides. The small subunit (glutamine amidotransferase) binds and cleaves glutamine to supply the large subunit with the substrate ammonia. This is Carbamoyl phosphate synthase small chain from Thioalkalivibrio sulfidiphilus (strain HL-EbGR7).